The chain runs to 305 residues: Translation initiation factor eIF2B subunit alpha (305 aa).

It belongs to the eIF-2B alpha/beta/delta subunits family. Component of the translation initiation factor 2B (eIF2B) complex which is a heterodecamer of two sets of five different subunits: alpha, beta, gamma, delta and epsilon. Subunits alpha, beta and delta comprise a regulatory subcomplex and subunits epsilon and gamma comprise a catalytic subcomplex. Within the complex, the hexameric regulatory complex resides at the center, with the two heterodimeric catalytic subcomplexes bound on opposite sides.

It localises to the cytoplasm. It is found in the cytosol. Activated by the chemical integrated stress response (ISR) inhibitor ISRIB which stimulates guanine nucleotide exchange factor activity for both phosphorylated and unphosphorylated eIF2. Acts as a component of the translation initiation factor 2B (eIF2B) complex, which catalyzes the exchange of GDP for GTP on eukaryotic initiation factor 2 (eIF2) gamma subunit. Its guanine nucleotide exchange factor activity is repressed when bound to eIF2 complex phosphorylated on the alpha subunit, thereby limiting the amount of methionyl-initiator methionine tRNA available to the ribosome and consequently global translation is repressed. This Bos taurus (Bovine) protein is Translation initiation factor eIF2B subunit alpha (EIF2B1).